A 689-amino-acid chain; its full sequence is Pentatricopeptide repeat-containing protein At1g71460, chloroplastic (689 aa).

Residues 1–49 (MEVVSSLGIRDLPASLSVTTSLNHRPHRSDKDGAPAKSPIRPSRTRRPS) constitute a chloroplast transit peptide. Residues 16-68 (LSVTTSLNHRPHRSDKDGAPAKSPIRPSRTRRPSTSPAKKPKPFRERDAFPSS) form a disordered region. The segment covering 38–52 (SPIRPSRTRRPSTSP) has biased composition (low complexity). 18 PPR repeats span residues 75–109 (NPYIIHRDIQIFARQNNLEVALTILDYLEQRGIPV), 110–144 (NATTFSALLEACVRRKSLLHGKQVHVHIRINGLES), 145–175 (NEFLRTKLVHMYTACGSVKDAQKVFDESTSS), 176–212 (NVYSWNALLRGTVISGKKRYQDVLSTFTEMRELGVDL), 213–247 (NVYSLSNVFKSFAGASALRQGLKTHALAIKNGLFN), 248–282 (SVFLKTSLVDMYFKCGKVGLARRVFDEIVERDIVV), 283–309 (WGAMIAGLAHNKRQWEALGLFRTMISE), 315–350 (NSVILTTILPVLGDVKALKLGKEVHAHVLKSKNYVE), 351–381 (QPFVHSGLIDLYCKCGDMASGRRVFYGSKQR), 382–416 (NAISWTALMSGYAANGRFDQALRSIVWMQQEGFRP), 417–451 (DVVTIATVLPVCAELRAIKQGKEIHCYALKNLFLP), 452–482 (NVSLVTSLMVMYSKCGVPEYPIRLFDRLEQR), 483–517 (NVKAWTAMIDCYVENCDLRAGIEVFRLMLLSKHRP), 518–552 (DSVTMGRVLTVCSDLKALKLGKELHGHILKKEFES), 553–583 (IPFVSARIIKMYGKCGDLRSANFSFDAVAVK), 584–618 (GSLTWTAIIEAYGCNELFRDAINCFEQMVSRGFTP), 619–649 (NTFTFTAVLSICSQAGFVDEAYRFFNLMLRM), and 655–689 (SEEHYSLVIELLNRCGRVEEAQRLAVMSSSSSLQT).

Belongs to the PPR family. PCMP-A subfamily.

It localises to the plastid. The protein localises to the chloroplast. The sequence is that of Pentatricopeptide repeat-containing protein At1g71460, chloroplastic (PCMP-A3) from Arabidopsis thaliana (Mouse-ear cress).